The sequence spans 429 residues: 3-oxo-tetronate kinase (429 aa).

ATP contacts are provided by residues Ser268, 366-369, and Gly410; that span reads GGET.

This sequence belongs to the four-carbon acid sugar kinase family.

The enzyme catalyses 3-dehydro-L-erythronate + ATP = 3-dehydro-4-O-phospho-L-erythronate + ADP + H(+). The catalysed reaction is 3-dehydro-D-erythronate + ATP = 3-dehydro-4-O-phospho-D-erythronate + ADP + H(+). Functionally, catalyzes the ATP-dependent phosphorylation of 3-oxo-tetronate to 3-oxo-tetronate 4-phosphate. The sequence is that of 3-oxo-tetronate kinase from Pseudomonas savastanoi pv. phaseolicola (strain 1448A / Race 6) (Pseudomonas syringae pv. phaseolicola (strain 1448A / Race 6)).